The following is a 122-amino-acid chain: Large ribosomal subunit protein uL14 (122 aa).

It belongs to the universal ribosomal protein uL14 family. As to quaternary structure, part of the 50S ribosomal subunit. Forms a cluster with proteins L3 and L19. In the 70S ribosome, L14 and L19 interact and together make contacts with the 16S rRNA in bridges B5 and B8.

Functionally, binds to 23S rRNA. Forms part of two intersubunit bridges in the 70S ribosome. The sequence is that of Large ribosomal subunit protein uL14 from Borrelia recurrentis (strain A1).